A 354-amino-acid polypeptide reads, in one-letter code: Uroporphyrinogen decarboxylase (354 aa).

Residues Arg25–Arg29, Asp75, Tyr152, Thr207, and His330 each bind substrate.

The protein belongs to the uroporphyrinogen decarboxylase family. As to quaternary structure, homodimer.

It localises to the cytoplasm. It catalyses the reaction uroporphyrinogen III + 4 H(+) = coproporphyrinogen III + 4 CO2. It participates in porphyrin-containing compound metabolism; protoporphyrin-IX biosynthesis; coproporphyrinogen-III from 5-aminolevulinate: step 4/4. Catalyzes the decarboxylation of four acetate groups of uroporphyrinogen-III to yield coproporphyrinogen-III. This is Uroporphyrinogen decarboxylase from Xanthomonas oryzae pv. oryzae (strain PXO99A).